Consider the following 303-residue polypeptide: MLPFCFEMTSMSYIGRFAPSPSGPLHFGSLIAALGSYFQAKSQHGQWLVRIEDLDPPREMPGAADLILKTLETYHLFWDGEVVYQSQRHHLYQAQIDHWLQSGQAYYCQCSRKQIKEMGGYYNGHCQELHLDAGAIRLKMTQPITHFDDLRHGQMHIPLELAQEDFIIKRRDGLFAYNLAVVLDDIDQGVTEVVRGADLIEPTGRQISLYHMLGQVPVRYLHLPLAMDKNGNKLSKQNHATGIDLTHPASMILEAMAFLGFAIPKELHQANLDEILRWGVQNWRLNQLPESLEITARFSNGTA.

L-glutamate-binding positions include 16–20 and glutamate 52; that span reads RFAPS. The short motif at 19–29 is the 'HIGH' region element; the sequence is PSPSGPLHFGS. Cysteine 108, cysteine 110, tyrosine 122, and cysteine 126 together coordinate Zn(2+). Residues tyrosine 177 and arginine 195 each coordinate L-glutamate. Positions 233–237 match the 'KMSKS' region motif; that stretch reads KLSKQ. Residue lysine 236 participates in ATP binding.

The protein belongs to the class-I aminoacyl-tRNA synthetase family. GluQ subfamily. Zn(2+) is required as a cofactor.

Its function is as follows. Catalyzes the tRNA-independent activation of glutamate in presence of ATP and the subsequent transfer of glutamate onto a tRNA(Asp). Glutamate is transferred on the 2-amino-5-(4,5-dihydroxy-2-cyclopenten-1-yl) moiety of the queuosine in the wobble position of the QUC anticodon. This chain is Glutamyl-Q tRNA(Asp) synthetase, found in Vibrio vulnificus (strain YJ016).